The following is a 186-amino-acid chain: MSSLAPCFTVGSIVRCKTCFGDNISGEVVAFDLGVKMLIMKCPSSNGGGDEQTTCNVTIVNLSLCMDIEIVKEAIPPAEVQQPEPIDLPMIRERYRYATEHRTLSCRSYHPNASPFGQALFRLLVKRFGDPAIIWQNKGDQVAINILRQVVIDAPYATENIRYLDWNPKLAICVQEVVQNFCSKQF.

Residues 1-74 (MSSLAPCFTV…CMDIEIVKEA (74 aa)) enclose the Sm domain. Residues 84–186 (EPIDLPMIRE…VVQNFCSKQF (103 aa)) enclose the AD domain.

The protein belongs to the LSM12 family. In terms of assembly, interacts with Sbat; along with Sbat and Vlet, may form an accessory subcomplex involved in SMN complex function.

Functionally, may have an accessory function in the survival motor neuron (SMN) complex. This is LSM12 homolog B from Drosophila melanogaster (Fruit fly).